A 699-amino-acid chain; its full sequence is Elongation factor G 1 (699 aa).

The region spanning 8-290 (ERYRNIGICA…AVIEYLPSPI (283 aa)) is the tr-type G domain. Residues 17-24 (AHVDAGKT), 88-92 (DTPGH), and 142-145 (NKMD) contribute to the GTP site.

This sequence belongs to the TRAFAC class translation factor GTPase superfamily. Classic translation factor GTPase family. EF-G/EF-2 subfamily.

It is found in the cytoplasm. Its function is as follows. Catalyzes the GTP-dependent ribosomal translocation step during translation elongation. During this step, the ribosome changes from the pre-translocational (PRE) to the post-translocational (POST) state as the newly formed A-site-bound peptidyl-tRNA and P-site-bound deacylated tRNA move to the P and E sites, respectively. Catalyzes the coordinated movement of the two tRNA molecules, the mRNA and conformational changes in the ribosome. This Vibrio vulnificus (strain YJ016) protein is Elongation factor G 1.